Here is a 137-residue protein sequence, read N- to C-terminus: Large ribosomal subunit protein uL16 (137 aa).

It belongs to the universal ribosomal protein uL16 family. Part of the 50S ribosomal subunit.

Functionally, binds 23S rRNA and is also seen to make contacts with the A and possibly P site tRNAs. The sequence is that of Large ribosomal subunit protein uL16 from Cereibacter sphaeroides (strain ATCC 17025 / ATH 2.4.3) (Rhodobacter sphaeroides).